Consider the following 713-residue polypeptide: Acetyl-coenzyme A synthetase 1 (713 aa).

The interval 1-39 (MSPSAVQSSKLEEQSSEIDKLKAKMSQSAATAQQKKEHE) is disordered. A compositionally biased stretch (basic and acidic residues) spans 10 to 22 (KLEEQSSEIDKLK). CoA contacts are provided by residues 248–251 (RGGK) and threonine 367. Residues 443 to 445 (GEP), 467 to 472 (DTYWQT), aspartate 559, and arginine 574 each bind ATP. The FACS signature appears at 552–600 (PGYYFTGDGAAKDKDGYIWILGRVDDVVNVSGHRLSTAEIEAAIIEDPI). A CoA-binding site is contributed by serine 582. An ATP-binding site is contributed by arginine 585. CoA is bound at residue arginine 650. A Microbody targeting signal motif is present at residues 711-713 (VKL).

The protein belongs to the ATP-dependent AMP-binding enzyme family.

It is found in the microsome. The protein localises to the cytoplasm. It localises to the mitochondrion. The protein resides in the nucleus. It carries out the reaction acetate + ATP + CoA = acetyl-CoA + AMP + diphosphate. In terms of biological role, catalyzes the production of acetyl-CoA. Provides the acetyl-CoA source for histone acetylation in the nucleus. 'Aerobic' isozyme of acetyl-coenzyme A synthetase, which supports growth on nonfermentable carbon sources such as glycerol and ethanol. May be required for assimilation of ethanol and acetate. The protein is Acetyl-coenzyme A synthetase 1 (ACS1) of Saccharomyces cerevisiae (strain ATCC 204508 / S288c) (Baker's yeast).